Consider the following 161-residue polypeptide: Ribosome maturation factor RimP (161 aa).

The protein belongs to the RimP family.

Its subcellular location is the cytoplasm. Its function is as follows. Required for maturation of 30S ribosomal subunits. The chain is Ribosome maturation factor RimP from Rickettsia conorii (strain ATCC VR-613 / Malish 7).